We begin with the raw amino-acid sequence, 157 residues long: Ribosome maturation factor RimM (157 aa).

The 68-residue stretch at P89–V156 folds into the PRC barrel domain.

This sequence belongs to the RimM family. Binds ribosomal protein uS19.

It is found in the cytoplasm. Its function is as follows. An accessory protein needed during the final step in the assembly of 30S ribosomal subunit, possibly for assembly of the head region. Essential for efficient processing of 16S rRNA. May be needed both before and after RbfA during the maturation of 16S rRNA. It has affinity for free ribosomal 30S subunits but not for 70S ribosomes. This Rhizorhabdus wittichii (strain DSM 6014 / CCUG 31198 / JCM 15750 / NBRC 105917 / EY 4224 / RW1) (Sphingomonas wittichii) protein is Ribosome maturation factor RimM.